The chain runs to 403 residues: Na(+)-translocating NADH-quinone reductase subunit B (403 aa).

The next 9 helical transmembrane spans lie at Met56 to Gly76, Ala121 to Phe141, Leu164 to Gly184, Gly225 to Gly245, Gly260 to Thr280, Ile287 to Ser307, Met312 to Phe332, Trp348 to Phe368, and Gly371 to Val391. Position 230 is an FMN phosphoryl threonine (Thr230).

It belongs to the NqrB/RnfD family. In terms of assembly, composed of six subunits; NqrA, NqrB, NqrC, NqrD, NqrE and NqrF. The cofactor is FMN.

It localises to the cell inner membrane. The catalysed reaction is a ubiquinone + n Na(+)(in) + NADH + H(+) = a ubiquinol + n Na(+)(out) + NAD(+). Its function is as follows. NQR complex catalyzes the reduction of ubiquinone-1 to ubiquinol by two successive reactions, coupled with the transport of Na(+) ions from the cytoplasm to the periplasm. NqrA to NqrE are probably involved in the second step, the conversion of ubisemiquinone to ubiquinol. This Pseudomonas paraeruginosa (strain DSM 24068 / PA7) (Pseudomonas aeruginosa (strain PA7)) protein is Na(+)-translocating NADH-quinone reductase subunit B.